The following is a 286-amino-acid chain: Bifunctional protein FolD (286 aa).

Residues 164–166 (GTS) and Ile230 each bind NADP(+).

It belongs to the tetrahydrofolate dehydrogenase/cyclohydrolase family. In terms of assembly, homodimer.

The enzyme catalyses (6R)-5,10-methylene-5,6,7,8-tetrahydrofolate + NADP(+) = (6R)-5,10-methenyltetrahydrofolate + NADPH. It carries out the reaction (6R)-5,10-methenyltetrahydrofolate + H2O = (6R)-10-formyltetrahydrofolate + H(+). Its pathway is one-carbon metabolism; tetrahydrofolate interconversion. Catalyzes the oxidation of 5,10-methylenetetrahydrofolate to 5,10-methenyltetrahydrofolate and then the hydrolysis of 5,10-methenyltetrahydrofolate to 10-formyltetrahydrofolate. This Mesoplasma florum (strain ATCC 33453 / NBRC 100688 / NCTC 11704 / L1) (Acholeplasma florum) protein is Bifunctional protein FolD.